The chain runs to 206 residues: Guanylate kinase (206 aa).

Residues 7-185 (GLLIVISGPS…AVEKIRAIII (179 aa)) enclose the Guanylate kinase-like domain. 14-21 (GPSGAGKG) is a binding site for ATP.

This sequence belongs to the guanylate kinase family.

Its subcellular location is the cytoplasm. It carries out the reaction GMP + ATP = GDP + ADP. In terms of biological role, essential for recycling GMP and indirectly, cGMP. In Caldanaerobacter subterraneus subsp. tengcongensis (strain DSM 15242 / JCM 11007 / NBRC 100824 / MB4) (Thermoanaerobacter tengcongensis), this protein is Guanylate kinase.